Here is a 277-residue protein sequence, read N- to C-terminus: Bis(5'-nucleosyl)-tetraphosphatase, symmetrical (277 aa).

Belongs to the Ap4A hydrolase family.

The enzyme catalyses P(1),P(4)-bis(5'-adenosyl) tetraphosphate + H2O = 2 ADP + 2 H(+). Its function is as follows. Hydrolyzes diadenosine 5',5'''-P1,P4-tetraphosphate to yield ADP. The polypeptide is Bis(5'-nucleosyl)-tetraphosphatase, symmetrical (Bordetella bronchiseptica (strain ATCC BAA-588 / NCTC 13252 / RB50) (Alcaligenes bronchisepticus)).